The chain runs to 217 residues: MLO-like protein (217 aa).

3 helical membrane passes run 35 to 55, 59 to 79, and 119 to 139; these read FKVVVGISPILWFFAVLFLLS, GWVAYLWLPFIPLIIILVVGT, and LVLFLIHFCLFQNAFQLAFFI.

It belongs to the MLO family.

The protein localises to the membrane. Its function is as follows. May be involved in modulation of pathogen defense and leaf cell death. The sequence is that of MLO-like protein from Linum usitatissimum (Flax).